The chain runs to 266 residues: Tryptophan synthase alpha chain (266 aa).

Residues E49 and D60 each act as proton acceptor in the active site.

Belongs to the TrpA family. As to quaternary structure, tetramer of two alpha and two beta chains.

The catalysed reaction is (1S,2R)-1-C-(indol-3-yl)glycerol 3-phosphate + L-serine = D-glyceraldehyde 3-phosphate + L-tryptophan + H2O. The protein operates within amino-acid biosynthesis; L-tryptophan biosynthesis; L-tryptophan from chorismate: step 5/5. The alpha subunit is responsible for the aldol cleavage of indoleglycerol phosphate to indole and glyceraldehyde 3-phosphate. The polypeptide is Tryptophan synthase alpha chain (Trichormus variabilis (strain ATCC 29413 / PCC 7937) (Anabaena variabilis)).